A 322-amino-acid chain; its full sequence is 4-hydroxy-3-methylbut-2-enyl diphosphate reductase (322 aa).

Cys12 serves as a coordination point for [4Fe-4S] cluster. (2E)-4-hydroxy-3-methylbut-2-enyl diphosphate-binding residues include His43 and His81. Dimethylallyl diphosphate is bound by residues His43 and His81. Residues His43 and His81 each coordinate isopentenyl diphosphate. [4Fe-4S] cluster is bound at residue Cys103. (2E)-4-hydroxy-3-methylbut-2-enyl diphosphate is bound at residue His131. His131 serves as a coordination point for dimethylallyl diphosphate. Position 131 (His131) interacts with isopentenyl diphosphate. Catalysis depends on Glu133, which acts as the Proton donor. Thr172 lines the (2E)-4-hydroxy-3-methylbut-2-enyl diphosphate pocket. [4Fe-4S] cluster is bound at residue Cys200. (2E)-4-hydroxy-3-methylbut-2-enyl diphosphate contacts are provided by Ser228, Asn230, and Ser273. Residues Ser228, Asn230, and Ser273 each coordinate dimethylallyl diphosphate. Positions 228, 230, and 273 each coordinate isopentenyl diphosphate.

The protein belongs to the IspH family. It depends on [4Fe-4S] cluster as a cofactor.

It carries out the reaction isopentenyl diphosphate + 2 oxidized [2Fe-2S]-[ferredoxin] + H2O = (2E)-4-hydroxy-3-methylbut-2-enyl diphosphate + 2 reduced [2Fe-2S]-[ferredoxin] + 2 H(+). The enzyme catalyses dimethylallyl diphosphate + 2 oxidized [2Fe-2S]-[ferredoxin] + H2O = (2E)-4-hydroxy-3-methylbut-2-enyl diphosphate + 2 reduced [2Fe-2S]-[ferredoxin] + 2 H(+). Its pathway is isoprenoid biosynthesis; dimethylallyl diphosphate biosynthesis; dimethylallyl diphosphate from (2E)-4-hydroxy-3-methylbutenyl diphosphate: step 1/1. It participates in isoprenoid biosynthesis; isopentenyl diphosphate biosynthesis via DXP pathway; isopentenyl diphosphate from 1-deoxy-D-xylulose 5-phosphate: step 6/6. Catalyzes the conversion of 1-hydroxy-2-methyl-2-(E)-butenyl 4-diphosphate (HMBPP) into a mixture of isopentenyl diphosphate (IPP) and dimethylallyl diphosphate (DMAPP). Acts in the terminal step of the DOXP/MEP pathway for isoprenoid precursor biosynthesis. This Macrococcus caseolyticus (strain JCSC5402) (Macrococcoides caseolyticum) protein is 4-hydroxy-3-methylbut-2-enyl diphosphate reductase.